Here is a 321-residue protein sequence, read N- to C-terminus: tRNA U34 carboxymethyltransferase (321 aa).

Residues Lys90, Trp104, Lys109, Gly129, 151–153 (DPT), 180–181 (IE), Met195, Tyr199, and Arg314 contribute to the carboxy-S-adenosyl-L-methionine site.

It belongs to the class I-like SAM-binding methyltransferase superfamily. CmoB family. In terms of assembly, homotetramer.

The catalysed reaction is carboxy-S-adenosyl-L-methionine + 5-hydroxyuridine(34) in tRNA = 5-carboxymethoxyuridine(34) in tRNA + S-adenosyl-L-homocysteine + H(+). Its function is as follows. Catalyzes carboxymethyl transfer from carboxy-S-adenosyl-L-methionine (Cx-SAM) to 5-hydroxyuridine (ho5U) to form 5-carboxymethoxyuridine (cmo5U) at position 34 in tRNAs. The sequence is that of tRNA U34 carboxymethyltransferase from Haemophilus influenzae (strain 86-028NP).